Reading from the N-terminus, the 1202-residue chain is DNA-directed RNA polymerase subunit beta (1202 aa).

Acidic residues predominate over residues 1151–1162; it reads LRDMDEEDDDVV. Residues 1151–1202 are disordered; the sequence is LRDMDEEDDDVVNVDALSKYAEKQNEKTNASAEEAKAPSTESAPVETKNNQN. Residues 1189-1202 are compositionally biased toward polar residues; it reads STESAPVETKNNQN.

It belongs to the RNA polymerase beta chain family. The RNAP catalytic core consists of 2 alpha, 1 beta, 1 beta' and 1 omega subunit. When a sigma factor is associated with the core the holoenzyme is formed, which can initiate transcription.

The catalysed reaction is RNA(n) + a ribonucleoside 5'-triphosphate = RNA(n+1) + diphosphate. In terms of biological role, DNA-dependent RNA polymerase catalyzes the transcription of DNA into RNA using the four ribonucleoside triphosphates as substrates. This chain is DNA-directed RNA polymerase subunit beta, found in Pediococcus pentosaceus (strain ATCC 25745 / CCUG 21536 / LMG 10740 / 183-1w).